A 70-amino-acid polypeptide reads, in one-letter code: Brevinin-1MT2 (70 aa).

A signal peptide spans 1-22; it reads MFTLKKSMLLLFFLGTINLSLC. Residues 23–44 constitute a propeptide that is removed on maturation; that stretch reads EQERNADEEERRDDDEMDVEVE. The cysteines at positions 64 and 70 are disulfide-linked.

It belongs to the frog skin active peptide (FSAP) family. Brevinin subfamily. As to expression, expressed by the skin glands.

It is found in the secreted. In terms of biological role, antimicrobial peptide with activity against a variety of Gram-negative and Gram-positive bacteria and against fungi. Shows strong hemolytic activity against human erythrocytes. The protein is Brevinin-1MT2 of Amolops mantzorum (Sichuan torrent frog).